Consider the following 417-residue polypeptide: Serine hydroxymethyltransferase (417 aa).

(6S)-5,6,7,8-tetrahydrofolate-binding positions include L120 and 124–126 (GHL). K229 carries the post-translational modification N6-(pyridoxal phosphate)lysine.

The protein belongs to the SHMT family. In terms of assembly, homodimer. Requires pyridoxal 5'-phosphate as cofactor.

Its subcellular location is the cytoplasm. The enzyme catalyses (6R)-5,10-methylene-5,6,7,8-tetrahydrofolate + glycine + H2O = (6S)-5,6,7,8-tetrahydrofolate + L-serine. It participates in one-carbon metabolism; tetrahydrofolate interconversion. It functions in the pathway amino-acid biosynthesis; glycine biosynthesis; glycine from L-serine: step 1/1. In terms of biological role, catalyzes the reversible interconversion of serine and glycine with tetrahydrofolate (THF) serving as the one-carbon carrier. This reaction serves as the major source of one-carbon groups required for the biosynthesis of purines, thymidylate, methionine, and other important biomolecules. Also exhibits THF-independent aldolase activity toward beta-hydroxyamino acids, producing glycine and aldehydes, via a retro-aldol mechanism. In Anaeromyxobacter sp. (strain K), this protein is Serine hydroxymethyltransferase.